We begin with the raw amino-acid sequence, 411 residues long: Tyrosine--tRNA ligase (411 aa).

Residue Tyr-34 participates in L-tyrosine binding. Positions 39–48 match the 'HIGH' region motif; sequence CTATSLHIGS. Residues Tyr-171 and Gln-175 each contribute to the L-tyrosine site. Residues 231–235 carry the 'KMSKS' region motif; that stretch reads KMGKT. An ATP-binding site is contributed by Lys-234. The 67-residue stretch at 345 to 411 folds into the S4 RNA-binding domain; the sequence is ISAYKLFYNV…GKKRHILVKV (67 aa).

The protein belongs to the class-I aminoacyl-tRNA synthetase family. TyrS type 1 subfamily. In terms of assembly, homodimer.

It localises to the cytoplasm. It carries out the reaction tRNA(Tyr) + L-tyrosine + ATP = L-tyrosyl-tRNA(Tyr) + AMP + diphosphate + H(+). In terms of biological role, catalyzes the attachment of tyrosine to tRNA(Tyr) in a two-step reaction: tyrosine is first activated by ATP to form Tyr-AMP and then transferred to the acceptor end of tRNA(Tyr). This chain is Tyrosine--tRNA ligase, found in Rickettsia typhi (strain ATCC VR-144 / Wilmington).